A 536-amino-acid polypeptide reads, in one-letter code: MEQLGTRNPSNGLETIGFSDLSVVRYNFEAAELYEEALRRGEAQLTAHGALCARTGQHTGRSPKDKYVVRDAATGDQIWWDNNSAISPENFERLRQDMLAHAKGMSLYVQDLVGGADQENALPTRVVTEFAWHSLFIRNLLIRPPREALASFLPKLTIIDLPSFKANPERHGCRGETIIACDLTKGLVLIGGTSYAGEMKKSVFTVLNYLLPNKAVMPMHCSANVGPAGDTAIFFGLSGTGKTTLSADPNRTLIGDDEHGWSDKGVFNFEGGCYAKAIRLSEAAEPEIFATTRRFGTVMENVVLDERRAPDFDNGSLTENTRIAYPLDFIPNASETGTAPQPRTIIMLTADAFGVLPPIAKLTPEQAMYHFLSGYTAKVAGTEKGVTEPEATFSTCFGAPFMPRHPSEYGNLLKDLIARNGVTCWLVNTGWTGGAYGTGSRMPIKVTRALLSAALDGSLNSAAFRTDANFGFAVPVSVPGVDDRILDPRSTWSDGQAYDAQARRLVDMFIANFAKFESHVDGSVRDAAPGTKLAAE.

Arginine 61, tyrosine 195, and lysine 201 together coordinate substrate. ATP is bound by residues lysine 201, histidine 220, and 236 to 244 (GLSGTGKTT). Lysine 201 and histidine 220 together coordinate Mn(2+). Aspartate 257 contributes to the Mn(2+) binding site. ATP contacts are provided by glutamate 285, arginine 322, and threonine 447. Position 322 (arginine 322) interacts with substrate.

The protein belongs to the phosphoenolpyruvate carboxykinase (ATP) family. The cofactor is Mn(2+).

Its subcellular location is the cytoplasm. It catalyses the reaction oxaloacetate + ATP = phosphoenolpyruvate + ADP + CO2. The protein operates within carbohydrate biosynthesis; gluconeogenesis. Its function is as follows. Involved in the gluconeogenesis. Catalyzes the conversion of oxaloacetate (OAA) to phosphoenolpyruvate (PEP) through direct phosphoryl transfer between the nucleoside triphosphate and OAA. In Sinorhizobium fredii (strain NBRC 101917 / NGR234), this protein is Phosphoenolpyruvate carboxykinase (ATP).